A 539-amino-acid polypeptide reads, in one-letter code: Hydroxylamine reductase (539 aa).

[4Fe-4S] cluster is bound by residues Cys3, Cys6, Cys15, and Cys21. Positions 235, 259, 303, 394, 422, 447, 482, and 484 each coordinate hybrid [4Fe-2O-2S] cluster. Cys394 is modified (cysteine persulfide).

It belongs to the HCP family. [4Fe-4S] cluster is required as a cofactor. Requires hybrid [4Fe-2O-2S] cluster as cofactor.

It localises to the cytoplasm. It carries out the reaction A + NH4(+) + H2O = hydroxylamine + AH2 + H(+). Its function is as follows. Catalyzes the reduction of hydroxylamine to form NH(3) and H(2)O. The chain is Hydroxylamine reductase from Methanocaldococcus jannaschii (strain ATCC 43067 / DSM 2661 / JAL-1 / JCM 10045 / NBRC 100440) (Methanococcus jannaschii).